A 5065-amino-acid chain; its full sequence is Dynein heavy chain-like protein 1 (5065 aa).

The segment at 1–1957 is stem; sequence MELEKTHLIN…IIKMADATFE (1957 aa). Positions 1677–1705 form a coiled coil; that stretch reads QMEGFQKQLDRLSDSLSKIQKALGEYLEK. Positions 1958–2179 are AAA 1; sequence YGYEYLGMCE…LRSLKSVLNS (222 aa). 1996 to 2003 serves as a coordination point for ATP; sequence GPAGTGKT. Residues 2203 to 2223 form a disordered region; sequence FNETLDNNNNNDNNNERKTTT. Residues 2204–2215 are compositionally biased toward low complexity; sequence NETLDNNNNNDN. AAA regions lie at residues 2281 to 2632, 2751 to 3004, and 3097 to 3367; these read NEIH…YEYI, DVDR…WKLA, and IFNE…GNRY. An ATP-binding site is contributed by 2319 to 2326; the sequence is GDVGTGKS. The interval 2507–2529 is disordered; the sequence is EKNQNGNENGNENEKKNINIINN. ATP is bound by residues 2790 to 2797 and 3135 to 3142; these read GPPGSGKT and GASGAGKT. The stalk stretch occupies residues 3386-3701; sequence IDEKKEEVSS…ETFINLEEAS (316 aa). Coiled coils occupy residues 3388 to 3466 and 3970 to 3997; these read EKKE…LDEQ and TMEK…EVEN. AAA stretches follow at residues 3754-3983 and 4289-4507; these read LSRP…EASK and FNKI…VVDS. Over residues 4686-4705 the composition is skewed to basic and acidic residues; that stretch reads KDKNKDEDKNKNKENDDNNK. Residues 4686–4727 form a disordered region; that stretch reads KDKNKDEDKNKNKENDDNNKKHIGNNKLVISSSERTESETSE.

The protein belongs to the dynein heavy chain family. Consists of at least two heavy chains and a number of intermediate and light chains.

It is found in the cytoplasm. It localises to the cytoskeleton. Its function is as follows. Acts as a motor for the intracellular retrograde motility of vesicles and organelles along microtubules. Dynein has ATPase activity; the force-producing power stroke is thought to occur on release of ADP. The polypeptide is Dynein heavy chain-like protein 1 (Plasmodium falciparum (isolate 3D7)).